The primary structure comprises 388 residues: Galactokinase (388 aa).

Glu33–Asp36 is a substrate binding site. Residues Ser67 and Gly125–Ser131 each bind ATP. Positions 131 and 163 each coordinate Mg(2+). Asp175 acts as the Proton acceptor in catalysis. Position 225 (Tyr225) interacts with substrate.

It belongs to the GHMP kinase family. GalK subfamily.

It is found in the cytoplasm. The enzyme catalyses alpha-D-galactose + ATP = alpha-D-galactose 1-phosphate + ADP + H(+). It participates in carbohydrate metabolism; galactose metabolism. In terms of biological role, catalyzes the transfer of the gamma-phosphate of ATP to D-galactose to form alpha-D-galactose-1-phosphate (Gal-1-P). This Limosilactobacillus fermentum (strain NBRC 3956 / LMG 18251) (Lactobacillus fermentum) protein is Galactokinase.